The following is a 144-amino-acid chain: MAKKIIGYIKLQIPAGKANPSPPVGPALGQRGLNIMEFCKAFNAATQGMEPGLPIPVVITAFADKSFTFVMKTPPASILLKKAAGLQKGSSNPLTNKVGKLTRAQLEEIAKTKDPDLTAADLDAAVRTIAGSARSMGLDVEGVV.

This sequence belongs to the universal ribosomal protein uL11 family. In terms of assembly, part of the ribosomal stalk of the 50S ribosomal subunit. Interacts with L10 and the large rRNA to form the base of the stalk. L10 forms an elongated spine to which L12 dimers bind in a sequential fashion forming a multimeric L10(L12)X complex. Post-translationally, one or more lysine residues are methylated.

Its function is as follows. Forms part of the ribosomal stalk which helps the ribosome interact with GTP-bound translation factors. The polypeptide is Large ribosomal subunit protein uL11 (Neisseria meningitidis serogroup B (strain ATCC BAA-335 / MC58)).